We begin with the raw amino-acid sequence, 88 residues long: UPF0297 protein YrzL (88 aa).

It belongs to the UPF0297 family.

This is UPF0297 protein YrzL (yrzL) from Bacillus subtilis (strain 168).